The chain runs to 528 residues: Folylpolyglutamate synthase (528 aa).

Position 104 to 107 (104 to 107) interacts with ATP; that stretch reads GKGG. Positions 134, 208, and 236 each coordinate Mg(2+). The ATP site is built by arginine 351 and aspartate 365.

This sequence belongs to the folylpolyglutamate synthase family. It depends on a monovalent cation as a cofactor.

Its subcellular location is the mitochondrion inner membrane. It is found in the mitochondrion matrix. It localises to the cytoplasm. It catalyses the reaction (6S)-5,6,7,8-tetrahydrofolyl-(gamma-L-Glu)(n) + L-glutamate + ATP = (6S)-5,6,7,8-tetrahydrofolyl-(gamma-L-Glu)(n+1) + ADP + phosphate + H(+). Its pathway is cofactor biosynthesis; tetrahydrofolylpolyglutamate biosynthesis. In terms of biological role, catalyzes conversion of folates to polyglutamate derivatives allowing concentration of folate compounds in the cell and the intracellular retention of these cofactors, which are important substrates for most of the folate-dependent enzymes that are involved in one-carbon transfer reactions involved in purine, pyrimidine and amino acid synthesis. The chain is Folylpolyglutamate synthase (met-6) from Neurospora crassa (strain ATCC 24698 / 74-OR23-1A / CBS 708.71 / DSM 1257 / FGSC 987).